The chain runs to 276 residues: Diaminopimelate epimerase (276 aa).

Substrate is bound by residues N13, Q46, and N66. C75 acts as the Proton donor in catalysis. Residues 76–77, N159, N192, and 210–211 each bind substrate; these read GN and ER. C219 acts as the Proton acceptor in catalysis. A substrate-binding site is contributed by 220-221; sequence GT.

This sequence belongs to the diaminopimelate epimerase family. In terms of assembly, homodimer.

The protein resides in the cytoplasm. It carries out the reaction (2S,6S)-2,6-diaminopimelate = meso-2,6-diaminopimelate. It participates in amino-acid biosynthesis; L-lysine biosynthesis via DAP pathway; DL-2,6-diaminopimelate from LL-2,6-diaminopimelate: step 1/1. In terms of biological role, catalyzes the stereoinversion of LL-2,6-diaminopimelate (L,L-DAP) to meso-diaminopimelate (meso-DAP), a precursor of L-lysine and an essential component of the bacterial peptidoglycan. The polypeptide is Diaminopimelate epimerase (Pseudomonas fluorescens (strain Pf0-1)).